Reading from the N-terminus, the 440-residue chain is Cyclic dipeptide prenyltransferase (440 aa).

The disordered stretch occupies residues 1 to 33; the sequence is MDGEMTASPPDISACDTSAVDEQTGQSGQSQAP. Residues 20–32 are compositionally biased toward polar residues; that stretch reads VDEQTGQSGQSQA. Substrate-binding residues include T108 and E116. R129, K219, and Y221 together coordinate dimethylallyl diphosphate. F223 contacts substrate. Dimethylallyl diphosphate contacts are provided by K286, Y288, Y366, Y431, and Y435.

This sequence belongs to the tryptophan dimethylallyltransferase family.

It carries out the reaction harmol + dimethylallyl diphosphate = 6-(3-dimethylallyl)harmol + diphosphate. The enzyme catalyses an N-terminal L-tryptophanyl-L-alpha-aminoacyl-[peptide] + H2O = an N-terminal L-alpha-aminoacyl-[peptide] + L-tryptophan. It catalyses the reaction (R)-benzodiazepinedione + dimethylallyl diphosphate = (2S,3R,11R)-aszonalenin + diphosphate. The catalysed reaction is (S)-benzodiazepinedione + dimethylallyl diphosphate = (2S,3R,11S)-aszonalenin + diphosphate. Prenyltransferase that catalyzes reverse prenylation at position N-1 of tryptophan-containing cyclic dipeptides. Accepts only dimethylallyl diphosphate (DMAPP) as the prenyl donor but shows broad substrate specificities toward its aromatic substrates. Also shows tryptophan aminopeptidase activity with preference for linear peptides containing a tryptophanyl moiety at the N-terminus. The protein is Cyclic dipeptide prenyltransferase of Aspergillus fumigatus (Neosartorya fumigata).